Here is a 301-residue protein sequence, read N- to C-terminus: UDP-3-O-acyl-N-acetylglucosamine deacetylase (301 aa).

Residues His75, His233, and Asp237 each contribute to the Zn(2+) site. The active-site Proton donor is the His260.

The protein belongs to the LpxC family. Requires Zn(2+) as cofactor.

It catalyses the reaction a UDP-3-O-[(3R)-3-hydroxyacyl]-N-acetyl-alpha-D-glucosamine + H2O = a UDP-3-O-[(3R)-3-hydroxyacyl]-alpha-D-glucosamine + acetate. Its pathway is glycolipid biosynthesis; lipid IV(A) biosynthesis; lipid IV(A) from (3R)-3-hydroxytetradecanoyl-[acyl-carrier-protein] and UDP-N-acetyl-alpha-D-glucosamine: step 2/6. Catalyzes the hydrolysis of UDP-3-O-myristoyl-N-acetylglucosamine to form UDP-3-O-myristoylglucosamine and acetate, the committed step in lipid A biosynthesis. This Aliarcobacter butzleri (strain RM4018) (Arcobacter butzleri) protein is UDP-3-O-acyl-N-acetylglucosamine deacetylase.